The sequence spans 373 residues: Putative protein YfkA (373 aa).

A Radical SAM core domain is found at 26–256; the sequence is YGDMQLTNVE…DIRDENTWML (231 aa). Positions 42, 46, and 49 each coordinate [4Fe-4S] cluster.

This sequence belongs to the radical SAM superfamily. The cofactor is [4Fe-4S] cluster.

This Bacillus subtilis (strain 168) protein is Putative protein YfkA (yfkA).